A 74-amino-acid chain; its full sequence is Translation initiation factor IF-1 (74 aa).

Residues 1–72 (MSKEDAIEVE…NKGRITYRLK (72 aa)) enclose the S1-like domain.

It belongs to the IF-1 family. As to quaternary structure, component of the 30S ribosomal translation pre-initiation complex which assembles on the 30S ribosome in the order IF-2 and IF-3, IF-1 and N-formylmethionyl-tRNA(fMet); mRNA recruitment can occur at any time during PIC assembly.

Its subcellular location is the cytoplasm. One of the essential components for the initiation of protein synthesis. Stabilizes the binding of IF-2 and IF-3 on the 30S subunit to which N-formylmethionyl-tRNA(fMet) subsequently binds. Helps modulate mRNA selection, yielding the 30S pre-initiation complex (PIC). Upon addition of the 50S ribosomal subunit IF-1, IF-2 and IF-3 are released leaving the mature 70S translation initiation complex. This is Translation initiation factor IF-1 from Synechococcus sp. (strain JA-3-3Ab) (Cyanobacteria bacterium Yellowstone A-Prime).